The chain runs to 71 residues: Small ribosomal subunit protein bS21 (71 aa).

The interval Tyr38 to Tyr71 is disordered. The segment covering Lys46 to Lys59 has biased composition (basic residues). Residues Leu60–Tyr71 are compositionally biased toward basic and acidic residues.

The protein belongs to the bacterial ribosomal protein bS21 family.

This chain is Small ribosomal subunit protein bS21, found in Hamiltonella defensa subsp. Acyrthosiphon pisum (strain 5AT).